The sequence spans 646 residues: WW domain-containing adapter protein with coiled-coil (646 aa).

Positions 1-138 are disordered; sequence MVMYARKQQR…YDSADDWSEH (138 aa). Residues 23–37 are compositionally biased toward polar residues; sequence QPFQALKYSSKSHPS. Positions 38–50 are enriched in basic and acidic residues; sequence SGDHRHEKMRDAA. S53 bears the Phosphoserine mark. A compositionally biased stretch (polar residues) spans 61 to 75; it reads RSNSPENKYSDSTGH. Low complexity predominate over residues 103–122; the sequence is NHSALHSSNSHSSNPSNNPS. The WW domain maps to 129–162; sequence YDSADDWSEHISSSGKKYYYNCRTEVSQWEKPKE. Phosphoserine is present on residues S131 and S142. Composition is skewed to basic and acidic residues over residues 158–174 and 182–191; these read EKPK…KEAN and PKDRDYRREV. 2 disordered regions span residues 158-352 and 428-541; these read EKPK…PQST and TQAQ…TATV. Polar residues predominate over residues 211-225; that stretch reads DASSLLPQNILSQTS. S225 bears the Phosphoserine mark. Residues 226 to 239 are compositionally biased toward basic and acidic residues; it reads RHNDKDYRLPRAET. Over residues 252–267 the composition is skewed to low complexity; it reads PVVHPTATPSTVPSSP. The segment covering 284–300 has biased composition (polar residues); it reads GASTLSKLPTPTASLPA. T293 bears the Phosphothreonine mark. K302 is subject to N6-acetyllysine. A compositionally biased stretch (polar residues) spans 316–331; it reads SHSCTTPSTSSASGLN. Over residues 332–351 the composition is skewed to low complexity; the sequence is PTSAPPTSASAVPVSPVPQS. The segment covering 428–463 has biased composition (polar residues); the sequence is TQAQPSNQSPMSLTSDASSPRSYVSPRISTPQTNTV. S446 carries the phosphoserine modification. T471 is modified (phosphothreonine). The span at 490–503 shows a compositional bias: polar residues; that stretch reads VSHSATQQPVTADK. 3 positions are modified to phosphoserine: S511, S523, and S525. Over residues 511–524 the composition is skewed to low complexity; that stretch reads SPRSLQRLSSQRSP. Residues 528–541 show a composition bias toward polar residues; that stretch reads PNHTCSSNASTATV. Residues 617–643 adopt a coiled-coil conformation; it reads QATLREQRILFLRQQIKELEKLKNQNS.

In terms of assembly, interacts (via coiled coil domain) with RNF20, RNF40 and UBE2A. Interacts (via WW domain) with RNA polymerase II. Interacts with MTOR and other components of the MTOR pathway including RPTOR, RUVBL1, RUVBL2, TTI1 and TTI2. Phosphorylated on tyrosine residues.

It is found in the nucleus speckle. The protein localises to the nucleus. Functionally, acts as a linker between gene transcription and histone H2B monoubiquitination at 'Lys-120' (H2BK120ub1). Interacts with the RNA polymerase II transcriptional machinery via its WW domain and with RNF20-RNF40 via its coiled coil region, thereby linking and regulating H2BK120ub1 and gene transcription. Regulates the cell-cycle checkpoint activation in response to DNA damage. Positive regulator of amino acid starvation-induced autophagy. Also acts as a negative regulator of basal autophagy. Positively regulates MTOR activity by promoting, in an energy-dependent manner, the assembly of the TTT complex composed of TELO2, TTI1 and TTI2 and the RUVBL complex composed of RUVBL1 and RUVBL2 into the TTT-RUVBL complex. This leads to the dimerization of the mTORC1 complex and its subsequent activation. May negatively regulate the ubiquitin proteasome pathway. In Mus musculus (Mouse), this protein is WW domain-containing adapter protein with coiled-coil (Wac).